A 189-amino-acid polypeptide reads, in one-letter code: Probable nicotinate-nucleotide adenylyltransferase (189 aa).

The protein belongs to the NadD family.

It catalyses the reaction nicotinate beta-D-ribonucleotide + ATP + H(+) = deamido-NAD(+) + diphosphate. The protein operates within cofactor biosynthesis; NAD(+) biosynthesis; deamido-NAD(+) from nicotinate D-ribonucleotide: step 1/1. Its function is as follows. Catalyzes the reversible adenylation of nicotinate mononucleotide (NaMN) to nicotinic acid adenine dinucleotide (NaAD). The sequence is that of Probable nicotinate-nucleotide adenylyltransferase from Staphylococcus aureus (strain bovine RF122 / ET3-1).